A 196-amino-acid polypeptide reads, in one-letter code: Glycerol-3-phosphate acyltransferase (196 aa).

5 helical membrane-spanning segments follow: residues 4–24, 53–73, 78–98, 114–134, and 140–160; these read FYIM…VVLT, LGVL…LIAI, LGDA…CYPV, IFLV…ALLV, and VSLG…FTEG.

Belongs to the PlsY family. As to quaternary structure, probably interacts with PlsX.

It is found in the cell inner membrane. The enzyme catalyses an acyl phosphate + sn-glycerol 3-phosphate = a 1-acyl-sn-glycero-3-phosphate + phosphate. Its pathway is lipid metabolism; phospholipid metabolism. Catalyzes the transfer of an acyl group from acyl-phosphate (acyl-PO(4)) to glycerol-3-phosphate (G3P) to form lysophosphatidic acid (LPA). This enzyme utilizes acyl-phosphate as fatty acyl donor, but not acyl-CoA or acyl-ACP. This is Glycerol-3-phosphate acyltransferase from Syntrophotalea carbinolica (strain DSM 2380 / NBRC 103641 / GraBd1) (Pelobacter carbinolicus).